Reading from the N-terminus, the 503-residue chain is Probable cytosol aminopeptidase (503 aa).

2 residues coordinate Mn(2+): Lys-270 and Asp-275. Residue Lys-282 is part of the active site. Asp-293, Asp-352, and Glu-354 together coordinate Mn(2+). The active site involves Arg-356.

Belongs to the peptidase M17 family. Requires Mn(2+) as cofactor.

It localises to the cytoplasm. It carries out the reaction Release of an N-terminal amino acid, Xaa-|-Yaa-, in which Xaa is preferably Leu, but may be other amino acids including Pro although not Arg or Lys, and Yaa may be Pro. Amino acid amides and methyl esters are also readily hydrolyzed, but rates on arylamides are exceedingly low.. The enzyme catalyses Release of an N-terminal amino acid, preferentially leucine, but not glutamic or aspartic acids.. Presumably involved in the processing and regular turnover of intracellular proteins. Catalyzes the removal of unsubstituted N-terminal amino acids from various peptides. The protein is Probable cytosol aminopeptidase of Citrobacter koseri (strain ATCC BAA-895 / CDC 4225-83 / SGSC4696).